The chain runs to 423 residues: Elongation factor 1-alpha (423 aa).

The 217-residue stretch at 5-221 (KEHINVAFIG…DLLKPPEKLV (217 aa)) folds into the tr-type G domain. Residues 14 to 21 (GHVDHGKS) form a G1 region. GTP is bound at residue 14 to 21 (GHVDHGKS). Ser-21 is a Mg(2+) binding site. The interval 70-74 (GVTID) is G2. The G3 stretch occupies residues 91 to 94 (DCPG). Residues 91–95 (DCPGH) and 146–149 (NKMD) contribute to the GTP site. Positions 146–149 (NKMD) are G4. Positions 185–187 (SAY) are G5.

The protein belongs to the TRAFAC class translation factor GTPase superfamily. Classic translation factor GTPase family. EF-Tu/EF-1A subfamily.

It localises to the cytoplasm. The enzyme catalyses GTP + H2O = GDP + phosphate + H(+). Functionally, GTP hydrolase that promotes the GTP-dependent binding of aminoacyl-tRNA to the A-site of ribosomes during protein biosynthesis. In Archaeoglobus fulgidus (strain ATCC 49558 / DSM 4304 / JCM 9628 / NBRC 100126 / VC-16), this protein is Elongation factor 1-alpha.